Reading from the N-terminus, the 86-residue chain is Large ribosomal subunit protein bL27 (86 aa).

Gly residues predominate over residues 1–11 (MATKKAGGGSR). Residues 1 to 24 (MATKKAGGGSRNGRDSAGRRLGVK) form a disordered region.

Belongs to the bacterial ribosomal protein bL27 family.

The protein is Large ribosomal subunit protein bL27 of Rickettsia africae (strain ESF-5).